The sequence spans 664 residues: Methionine--tRNA ligase (664 aa).

Positions 15–25 match the 'HIGH' region motif; that stretch reads YYPSGKLHIGH. Residues 311–315 carry the 'KMSKS' region motif; that stretch reads KMSKS. ATP is bound at residue K314. The segment at 536–556 is disordered; it reads MQGSAPAKEETKEEEPQEVDR. One can recognise a tRNA-binding domain in the interval 570 to 662; it reads LRVAEVIEAE…IDQSLPKGTR (93 aa).

The protein belongs to the class-I aminoacyl-tRNA synthetase family. MetG type 2B subfamily. Homodimer.

The protein localises to the cytoplasm. It catalyses the reaction tRNA(Met) + L-methionine + ATP = L-methionyl-tRNA(Met) + AMP + diphosphate. In terms of biological role, is required not only for elongation of protein synthesis but also for the initiation of all mRNA translation through initiator tRNA(fMet) aminoacylation. This Bacillus subtilis (strain 168) protein is Methionine--tRNA ligase (metG).